We begin with the raw amino-acid sequence, 656 residues long: Pumilio homology domain family member 6 (656 aa).

The interval 1–107 is disordered; sequence MAPLTKKTNG…GGENGNHTEQ (107 aa). The span at 13-23 shows a compositional bias: basic and acidic residues; it reads SAKEVSHSEKK. Phosphoserine; by CK2 is present on residues Ser31, Ser34, and Ser35. Phosphoserine occurs at positions 34 and 35. The span at 52-89 shows a compositional bias: acidic residues; the sequence is SDDDDLDDLSTSDSEAEEEADELDISDDSEEHENENEE. A compositionally biased stretch (basic and acidic residues) spans 90-107; the sequence is KEGKDKSEGGENGNHTEQ. In terms of domain architecture, PUM-HD spans 133–483; that stretch reads RLRVKTPPLP…ELLSKFAPMF (351 aa). 6 Pumilio repeats span residues 155-191, 192-227, 228-264, 340-376, 377-413, and 415-450; these read ELSKDCISDLVLKHDASRIVQTLVKYSSKDRREQIVD, ALKGKFYVLATSAYGKYLLVKLLHYGSRSSRQTIIN, ELHGSLRKLMRHREGAYVVEDLFVLYATHEQRQQMIK, ELLHEQFAELVHTPEGSDVACTLVARANAKERKLILK, ALKNHAEKLIKNEYGNIVFITILNCVDDTVLVFKTFS, and TVKEHLQEFIIDKFGRRPWLYILLGLDGKYFSPIVK.

It belongs to the PUF6 family. As to quaternary structure, component of the ASH1 mRNP composed of at least PUF6, SHE2, SHE3, SHE1 and the ASH1 mRNA. Interacts with SHE2 and FUN12. Phosphorylation by CK2 relieves translational repression activity.

It localises to the bud tip. The protein localises to the nucleus. It is found in the nucleolus. Functionally, RNA-binding protein involved in post-transcriptional regulation. Component of the ASH1 mRNP which transports the ASH1 mRNA to the distal tip of the bud, where the ASH1 protein is translated and targeted to the daughter cell nucleus. Binds to the ASH1 3'-UTR containing the PUF consensus UUGU segment and represses its translation. This silencing of ASH1 mRNA is critical for asymmetric seggregation of ASH1 to the daughter cell nucleus. This chain is Pumilio homology domain family member 6 (PUF6), found in Saccharomyces cerevisiae (strain ATCC 204508 / S288c) (Baker's yeast).